The primary structure comprises 410 residues: Tryptophan synthase beta chain (410 aa).

Lysine 98 carries the N6-(pyridoxal phosphate)lysine modification.

Belongs to the TrpB family. In terms of assembly, tetramer of two alpha and two beta chains. The cofactor is pyridoxal 5'-phosphate.

The catalysed reaction is (1S,2R)-1-C-(indol-3-yl)glycerol 3-phosphate + L-serine = D-glyceraldehyde 3-phosphate + L-tryptophan + H2O. The protein operates within amino-acid biosynthesis; L-tryptophan biosynthesis; L-tryptophan from chorismate: step 5/5. In terms of biological role, the beta subunit is responsible for the synthesis of L-tryptophan from indole and L-serine. In Roseobacter denitrificans (strain ATCC 33942 / OCh 114) (Erythrobacter sp. (strain OCh 114)), this protein is Tryptophan synthase beta chain.